The primary structure comprises 1699 residues: Cilia- and flagella-associated protein 61 (1699 aa).

The segment covering 1–22 (MYSNNQLDNPNHSRSQYRNGDQ) has biased composition (polar residues). 3 disordered regions span residues 1–23 (MYSNNQLDNPNHSRSQYRNGDQS), 489–515 (QLKRPQKKVTKRPKRQKEEDKKEDEFK), and 1340–1365 (ERDANSENADKGFDDTQSRDGDEENQ). Residues 489 to 503 (QLKRPQKKVTKRPKR) are compositionally biased toward basic residues. Composition is skewed to basic and acidic residues over residues 504–515 (QKEEDKKEDEFK) and 1340–1359 (ERDANSENADKGFDDTQSRD).

It localises to the cell projection. It is found in the cilium. As component of a spoke-associated complex, regulates ciliary mobility by mediating a stable and functional assembly of the radial spoke 3 (RS3). The sequence is that of Cilia- and flagella-associated protein 61 from Tetrahymena thermophila (strain SB210).